A 118-amino-acid polypeptide reads, in one-letter code: Large ribosomal subunit protein uL24 (118 aa).

It belongs to the universal ribosomal protein uL24 family. Part of the 50S ribosomal subunit.

In terms of biological role, one of two assembly initiator proteins, it binds directly to the 5'-end of the 23S rRNA, where it nucleates assembly of the 50S subunit. Functionally, one of the proteins that surrounds the polypeptide exit tunnel on the outside of the subunit. The protein is Large ribosomal subunit protein uL24 of Prochlorococcus marinus (strain NATL1A).